Reading from the N-terminus, the 145-residue chain is Large-conductance mechanosensitive channel (145 aa).

A run of 2 helical transmembrane segments spans residues 16 to 36 and 83 to 103; these read VVDL…VTSF and GVFI…FMVI.

It belongs to the MscL family. As to quaternary structure, homopentamer.

The protein localises to the cell inner membrane. Channel that opens in response to stretch forces in the membrane lipid bilayer. May participate in the regulation of osmotic pressure changes within the cell. In Geobacter metallireducens (strain ATCC 53774 / DSM 7210 / GS-15), this protein is Large-conductance mechanosensitive channel.